The chain runs to 172 residues: Small ribosomal subunit protein uS5 (172 aa).

An S5 DRBM domain is found at 11-74 (LFESVVDIAR…RKAKGAMIRF (64 aa)).

It belongs to the universal ribosomal protein uS5 family. In terms of assembly, part of the 30S ribosomal subunit. Contacts proteins S4 and S8.

Its function is as follows. With S4 and S12 plays an important role in translational accuracy. In terms of biological role, located at the back of the 30S subunit body where it stabilizes the conformation of the head with respect to the body. The chain is Small ribosomal subunit protein uS5 from Neorickettsia sennetsu (strain ATCC VR-367 / Miyayama) (Ehrlichia sennetsu).